We begin with the raw amino-acid sequence, 447 residues long: MTVKDILDAIQSKDATSADFAALQLPESYRAITVHKDETEMFAGLETRDKDPRKSIHLDEVPVPELGPGEALVAVMASSVNYNSVWTSIFEPVSTFAFLERYGKLSPLTKRHDLPYHIIGSDLAGVVLRTGPGVNAWQPGDEVVAHCLSVELESPDGHDDTMLDPEQRIWGFETNFGGLAEIALVKTNQLMPKPKHLTWEEAAAPGLVNSTAYRQLVSRNGAAMKQGDNVLIWGASGGLGSYATQFALAGGANPICVVSSPQKAEICRSMGAEAIIDRNAEGYKFWKDEHTQDPKEWKRFGKRIRELTGGEDIDIVFEHPGRETFGASVYVTRKGGTITTCASTSGYMHEYDNRYLWMSLKRIIGSHFANYREAYEANRLIAKGKIHPTLSKTYSLEETGQAAYDVHRNLHQGKVGVLCLAPEEGLGVRDAEMRAQHIDAINRFRNV.

The protein belongs to the zinc-containing alcohol dehydrogenase family. Crotonyl-CoA carboxylase/reductase subfamily. As to quaternary structure, homodimer.

It catalyses the reaction butanoyl-CoA + NADP(+) = (2E)-butenoyl-CoA + NADPH + H(+). Inhibited by divalent cations (30-100%), beta-chloromercuribenzoate (85%), iodoacetamide (40%) and N-ethylmaleamide (80%). The presence of CoA thioesters containing 12-20 carbon atoms results in inhibition of enzyme activity. The greatest degree of inhibition is observed in the presence of palmitoyl-CoA and myristoyl-CoA. The branched-chain fatty acids, isopalmitoyl-CoA and isomyristoyl-CoA are less effective inhibitors of the crotonyl-CoA reductase. Concentrations of NADPH above 200 uM lead to inhibition of enzyme activity. Its function is as follows. May play a role in supplying butyryl-CoA for straight-chain fatty acid biosynthesis. Catalyzes the conversion of crotonyl-CoA to butyryl-CoA. It shows a high substrate specificity for crotonyl-CoA, a short-chain-length (C4), but no measurable activity is observed with shorter (C3) or longer-chain-length enoyl-CoA thioesters. The sequence is that of Crotonyl-CoA reductase (ccr) from Streptomyces collinus.